The sequence spans 494 residues: Tripartite motif-containing protein 5 (494 aa).

Ala-2 is modified (N-acetylalanine). The segment at 15–59 (CPICLELLTEPLSLDCGHSFCQACITANHKKSMLHQGERSCPLCR) adopts an RING-type zinc-finger fold. A Phosphoserine modification is found at Ser-86. The B box-type zinc finger occupies 91-132 (QKVDHCARHGEKLLLFCQQDGNVICWLCERSQEHRGHHTLLV). Residues Cys-96, His-99, Cys-118, and His-124 each contribute to the Zn(2+) site. Positions 132–222 (VEEVAQTYRE…KRLTQSENDM (91 aa)) form a coiled coil. Residues 186–199 (FKQLRDILDCEESN) are required for interaction with GABARAP and for autophagy. Positions 280–494 (PDLKGMLQVF…LPMTLCSPRS (215 aa)) constitute a B30.2/SPRY domain.

It belongs to the TRIM/RBCC family. As to quaternary structure, can form homodimers and homotrimers. In addition to lower-order dimerization, also exhibits a higher-order multimerization and both low- and high-order multimerizations are essential for its restriction activity. Interacts with BTBD1 and BTBD2. Interacts with PSMC4, PSMC5, PSMD7 and HSPA8/HSC70. Interacts (via B30.2/SPRY domain) with HSPA1A/B. Interacts with PSMC2, MAP3K7/TAK1, TAB2 and TAB3. Interacts with SQSTM1. Interacts with TRIM6 and TRIM34. Interacts with ULK1 (phosphorylated form), GABARAP, GABARAPL1, GABARAPL2, MAP1LC3A, MAP1LC3C and BECN1. Post-translationally, degraded in a proteasome-independent fashion in the absence of viral infection but in a proteasome-dependent fashion following exposure to restriction sensitive virus. Autoubiquitinated in a RING finger- and UBE2D2-dependent manner. Monoubiquitinated by TRIM21. Deubiquitinated by Yersinia YopJ. Ubiquitination may not lead to proteasomal degradation.

It is found in the cytoplasm. The protein localises to the nucleus. The enzyme catalyses S-ubiquitinyl-[E2 ubiquitin-conjugating enzyme]-L-cysteine + [acceptor protein]-L-lysine = [E2 ubiquitin-conjugating enzyme]-L-cysteine + N(6)-ubiquitinyl-[acceptor protein]-L-lysine.. The protein operates within protein modification; protein ubiquitination. Its function is as follows. Capsid-specific restriction factor that prevents infection from non-host-adapted retroviruses. Blocks viral replication early in the life cycle, after viral entry but before reverse transcription. In addition to acting as a capsid-specific restriction factor, also acts as a pattern recognition receptor that activates innate immune signaling in response to the retroviral capsid lattice. Binding to the viral capsid triggers its E3 ubiquitin ligase activity, and in concert with the heterodimeric ubiquitin conjugating enzyme complex UBE2V1-UBE2N (also known as UBC13-UEV1A complex) generates 'Lys-63'-linked polyubiquitin chains, which in turn are catalysts in the autophosphorylation of the MAP3K7/TAK1 complex (includes TAK1, TAB2, and TAB3). Activation of the MAP3K7/TAK1 complex by autophosphorylation results in the induction and expression of NF-kappa-B and MAPK-responsive inflammatory genes, thereby leading to an innate immune response in the infected cell. Plays a role in regulating autophagy through activation of autophagy regulator BECN1 by causing its dissociation from its inhibitors BCL2 and TAB2. The sequence is that of Tripartite motif-containing protein 5 (TRIM5) from Pithecia pithecia (White-faced saki).